Here is a 496-residue protein sequence, read N- to C-terminus: Lysosomal Pro-X carboxypeptidase (496 aa).

The first 21 residues, 1–21 (MGRRALLLLLLSFLAPWTTIA), serve as a signal peptide directing secretion. Residues 22 to 45 (LRPALRALGSLHLPTNPTSLPAVA) constitute a propeptide that is removed on maturation. Residues N47 and N101 are each glycosylated (N-linked (GlcNAc...) asparagine). S179 acts as the Charge relay system in catalysis. Residues 194 to 334 (HMVVGALAAS…QNIFQALNVY (141 aa)) are SKS domain. 4 disulfides stabilise this stretch: C215–C372, C233–C310, C264–C343, and C364–C394. N-linked (GlcNAc...) asparagine glycans are attached at residues N317, N336, and N345. N-linked (GlcNAc...) asparagine glycosylation is present at N415. Residues D430 and H455 each act as charge relay system in the active site.

This sequence belongs to the peptidase S28 family. Homodimer.

Its subcellular location is the lysosome. The enzyme catalyses Cleavage of a -Pro-|-Xaa bond to release a C-terminal amino acid.. Its function is as follows. Cleaves C-terminal amino acids linked to proline in peptides such as angiotensin II, III and des-Arg9-bradykinin. This cleavage occurs at acidic pH, but enzymatic activity is retained with some substrates at neutral pH. The sequence is that of Lysosomal Pro-X carboxypeptidase (PRCP) from Pongo abelii (Sumatran orangutan).